The chain runs to 346 residues: Integrin beta-1-binding protein 2 (346 aa).

The Zn(2+) site is built by C5, C10, C24, and H27. In terms of domain architecture, CHORD 1 spans 5 to 64 (CHNKGCGQHFDPQTNLPDSCCHHPGVPVFHDALKGWSCCRKRTVDFSEFLNIKGCTVGPH). Residues 28-31 (PGVP) carry the SH3-binding motif. Positions 42, 43, 59, and 64 each coordinate Zn(2+). The SH3-binding signature appears at 70 to 78 (PEAPQPEGP). The interval 70 to 113 (PEAPQPEGPATSSSLLEQKPPNTIPKSAETLRRERPKSDLPPKL) is disordered. Over residues 79–94 (ATSSSLLEQKPPNTIP) the composition is skewed to polar residues. Basic and acidic residues predominate over residues 98–109 (ETLRRERPKSDL). Residues C150 and C155 each coordinate Zn(2+). One can recognise a CHORD 2 domain in the interval 150-209 (CQNPGCDAVYQGSESDATPCTYHPGAPRFHEGMKSWSCCGIQTLDFGVFLAQPGCRVGRH). An SH2-binding motif is present at residues 159–162 (YQGS). The Zn(2+) site is built by C169 and H172. The SH3-binding motif lies at 173-176 (PGAP). Positions 187, 188, 204, and 209 each coordinate Zn(2+). In terms of domain architecture, CS spans 216–305 (LASCRHDWHQ…ADPGFWAQLE (90 aa)). The SH2-binding motif lies at 235–238 (YGQI). The interval 311 to 346 (AEKSKSGVGLEMDEEESEDSDDDLSWTEEEEEAMGE) is disordered. Residues 321-346 (EMDEEESEDSDDDLSWTEEEEEAMGE) are compositionally biased toward acidic residues.

As to quaternary structure, interacts with beta-1 integrin subunit. This interaction is regulated by divalent cations, and it occurs only in absence of calcium.

Its function is as follows. May play a role during maturation and/or organization of muscles cells. This Sus scrofa (Pig) protein is Integrin beta-1-binding protein 2 (ITGB1BP2).